Here is a 207-residue protein sequence, read N- to C-terminus: Ribosomal RNA small subunit methyltransferase G (207 aa).

Residues G73, L78, 124–125 (VE), and R139 contribute to the S-adenosyl-L-methionine site.

It belongs to the methyltransferase superfamily. RNA methyltransferase RsmG family.

It localises to the cytoplasm. The enzyme catalyses guanosine(527) in 16S rRNA + S-adenosyl-L-methionine = N(7)-methylguanosine(527) in 16S rRNA + S-adenosyl-L-homocysteine. Functionally, specifically methylates the N7 position of guanine in position 527 of 16S rRNA. The sequence is that of Ribosomal RNA small subunit methyltransferase G from Salmonella choleraesuis (strain SC-B67).